Consider the following 487-residue polypeptide: Glycogen synthase (487 aa).

Lysine 19 lines the ADP-alpha-D-glucose pocket.

It belongs to the glycosyltransferase 1 family. Bacterial/plant glycogen synthase subfamily.

The enzyme catalyses [(1-&gt;4)-alpha-D-glucosyl](n) + ADP-alpha-D-glucose = [(1-&gt;4)-alpha-D-glucosyl](n+1) + ADP + H(+). The protein operates within glycan biosynthesis; glycogen biosynthesis. Its function is as follows. Synthesizes alpha-1,4-glucan chains using ADP-glucose. This Moorella thermoacetica (strain ATCC 39073 / JCM 9320) protein is Glycogen synthase.